We begin with the raw amino-acid sequence, 92 residues long: Small ribosomal subunit protein uS19 (92 aa).

This sequence belongs to the universal ribosomal protein uS19 family.

Functionally, protein S19 forms a complex with S13 that binds strongly to the 16S ribosomal RNA. The polypeptide is Small ribosomal subunit protein uS19 (Chelativorans sp. (strain BNC1)).